The sequence spans 284 residues: Bifunctional protein FolD (284 aa).

NADP(+) contacts are provided by residues 166–168 and isoleucine 232; that span reads GAS.

This sequence belongs to the tetrahydrofolate dehydrogenase/cyclohydrolase family. In terms of assembly, homodimer.

The catalysed reaction is (6R)-5,10-methylene-5,6,7,8-tetrahydrofolate + NADP(+) = (6R)-5,10-methenyltetrahydrofolate + NADPH. The enzyme catalyses (6R)-5,10-methenyltetrahydrofolate + H2O = (6R)-10-formyltetrahydrofolate + H(+). The protein operates within one-carbon metabolism; tetrahydrofolate interconversion. Catalyzes the oxidation of 5,10-methylenetetrahydrofolate to 5,10-methenyltetrahydrofolate and then the hydrolysis of 5,10-methenyltetrahydrofolate to 10-formyltetrahydrofolate. The sequence is that of Bifunctional protein FolD from Shewanella oneidensis (strain ATCC 700550 / JCM 31522 / CIP 106686 / LMG 19005 / NCIMB 14063 / MR-1).